The primary structure comprises 492 residues: Solute carrier family 2, facilitated glucose transporter member 1 (492 aa).

N-acetylmethionine is present on Met-1. Topologically, residues 1–11 are cytoplasmic; the sequence is MEPSSKKLTGR. Residues 12–33 form a helical membrane-spanning segment; that stretch reads LMLAVGGAVLGSLQFGYNTGVI. At 34–66 the chain is on the extracellular side; the sequence is NAPQKVIEEFYNQTWLHRYGESISPATLTTLWS. The N-linked (GlcNAc...) asparagine glycan is linked to Asn-45. Residues 67-87 traverse the membrane as a helical segment; the sequence is LSVAIFSVGGMIGSFSVGLFV. The Cytoplasmic portion of the chain corresponds to 88–90; it reads NRF. Residues 91-112 form a helical membrane-spanning segment; it reads GRRNSMLMMNLLAFISAVLMGF. The Extracellular segment spans residues 113–120; sequence SKLGKSFE. A helical transmembrane segment spans residues 121-144; it reads MLILGRFIIGVYCGLTTGFVPMYV. Residues 145 to 155 are Cytoplasmic-facing; it reads GEVSPTALRGA. The helical transmembrane segment at 156-176 threads the bilayer; the sequence is LGTLHQLGIVVGILIAQVFGL. Gln-161 lines the D-glucose pocket. Residues 177 to 185 are Extracellular-facing; sequence DSIMGNEEL. The chain crosses the membrane as a helical span at residues 186 to 206; that stretch reads WPLLLSVIFIPALLQCVLLPF. At 207 to 271 the chain is on the cytoplasmic side; sequence CPESPRFLLI…LFRSAAYRQP (65 aa). The residue at position 226 (Ser-226) is a Phosphoserine. A helical membrane pass occupies residues 272 to 293; it reads ILIAVVLQLSQQLSGINAVFYY. Residues 282-283 and Asn-288 each bind D-glucose; that span reads QQ. Residues 294–306 are Extracellular-facing; sequence STSIFEKAGVQQP. The chain crosses the membrane as a helical span at residues 307-328; sequence VYATIGSGIVNTAFTVVSLFVV. Asn-317 contributes to the D-glucose binding site. Topologically, residues 329–334 are cytoplasmic; sequence ERAGRR. The chain crosses the membrane as a helical span at residues 335–355; it reads TLHLIGLAGMAGCAVLMTIAL. At 356–365 the chain is on the extracellular side; that stretch reads ALLEQLPWMS. The chain crosses the membrane as a helical span at residues 366–388; it reads YLSIVAIFGFVAFFEVGPGPIPW. 2 residues coordinate D-glucose: Glu-380 and Trp-388. The Cytoplasmic portion of the chain corresponds to 389 to 401; the sequence is FIVAELFSQGPRP. Residues 402 to 422 traverse the membrane as a helical segment; that stretch reads AAIAVAGFSNWTSNFIVGMCF. Residues 423-429 are Extracellular-facing; it reads QYVEQLC. The helical transmembrane segment at 430–450 threads the bilayer; sequence GPYVFIIFTVLLVLFFIFTYF. The residue at position 465 (Ser-465) is a Phosphoserine. Residues 468-492 are disordered; sequence RQGGASQSDKTPEELFHPLGADSQV. Phosphothreonine is present on Thr-478. Ser-490 carries the phosphoserine modification.

The protein belongs to the major facilitator superfamily. Sugar transporter (TC 2.A.1.1) family. Glucose transporter subfamily. As to quaternary structure, found in a complex with ADD2, DMTN and SLC2A1. Interacts (via C-terminus cytoplasmic region) with DMTN. Interacts with SNX27; the interaction is required when endocytosed to prevent degradation in lysosomes and promote recycling to the plasma membrane. Interacts with GIPC (via PDZ domain). Interacts with STOM. Interacts with SGTA (via Gln-rich region). Interacts with BSG. Interacts with SMIM43; the interaction may promote SLC2A1-mediated glucose transport to meet the energy needs of mesendoderm differentiation. Phosphorylation at Ser-226 by PKC promotes glucose uptake by increasing cell membrane localization.

Its subcellular location is the cell membrane. It is found in the photoreceptor inner segment. The enzyme catalyses D-glucose(out) = D-glucose(in). With respect to regulation, the uptake of glucose is inhibited by cytochalasin B. Glucose uptake is increased in response to phorbol ester 12-O-tetradecanoylphorbol-13-acetate (TPA) treatment: TPA-induced glucose uptake requires phosphorylation at Ser-226. Facilitative glucose transporter, which is responsible for constitutive or basal glucose uptake. Has a very broad substrate specificity; can transport a wide range of aldoses including both pentoses and hexoses. Most important energy carrier of the brain: present at the blood-brain barrier and assures the energy-independent, facilitative transport of glucose into the brain. In association with BSG and NXNL1, promotes retinal cone survival by increasing glucose uptake into photoreceptors. Required for mesendoderm differentiation. This chain is Solute carrier family 2, facilitated glucose transporter member 1, found in Sus scrofa (Pig).